The sequence spans 520 residues: Alkaline nuclease (520 aa).

The protein belongs to the herpesviridae alkaline nuclease family. In terms of assembly, interacts with major DNA-binding protein; this interaction increases the nuclease processivity of the alkaline exonuclease.

Its subcellular location is the host nucleus. It is found in the host cytoplasm. Its function is as follows. Plays a role in processing non linear or branched viral DNA intermediates in order to promote the production of mature packaged unit-length linear progeny viral DNA molecules. Exhibits endonuclease and exonuclease activities and accepts both double-stranded and single-stranded DNA as substrate. Exonuclease digestion of DNA is in the 5'-&gt; 3' direction and the products are 5'-monophosphate nucleosides. Additionally, forms a recombinase with the major DNA-binding protein, which displays strand exchange activity. This chain is Alkaline nuclease (UL12), found in Psittacid herpesvirus 1 (isolate Amazon parrot/-/97-0001/1997) (PsHV-1).